We begin with the raw amino-acid sequence, 147 residues long: Large ribosomal subunit protein bL9 (147 aa).

The tract at residues 44 to 63 (VKTLDAQKRSEDKRKEQEKL) is disordered. A compositionally biased stretch (basic and acidic residues) spans 48-63 (DAQKRSEDKRKEQEKL).

This sequence belongs to the bacterial ribosomal protein bL9 family.

Binds to the 23S rRNA. This is Large ribosomal subunit protein bL9 from Brevibacillus brevis (strain 47 / JCM 6285 / NBRC 100599).